The chain runs to 436 residues: Trigger factor (436 aa).

The region spanning glycine 164–proline 249 is the PPIase FKBP-type domain.

This sequence belongs to the FKBP-type PPIase family. Tig subfamily.

It localises to the cytoplasm. It carries out the reaction [protein]-peptidylproline (omega=180) = [protein]-peptidylproline (omega=0). Its function is as follows. Involved in protein export. Acts as a chaperone by maintaining the newly synthesized protein in an open conformation. Functions as a peptidyl-prolyl cis-trans isomerase. In Ligilactobacillus salivarius (strain UCC118) (Lactobacillus salivarius), this protein is Trigger factor.